A 1530-amino-acid polypeptide reads, in one-letter code: Coiled-coil domain-containing protein 141 (1530 aa).

Residues 49–127 (NLLEIGSSQD…SMLERRRELL (79 aa)) form a Spectrin repeat. Thr91 is subject to Phosphothreonine. Coiled-coil stretches lie at residues 220–251 (IDSLLELLQDRRRQLDKHLQQQRQELSQVLQL), 758–785 (LKEKAEQLKDLIHLHQRQRERIQEYEEI), and 865–967 (AKSL…VNKK). 4 disordered regions span residues 1153 to 1240 (SEER…PASS), 1259 to 1285 (LGKAPESVLPPPTAFTDGYHNKKDTFT), 1324 to 1356 (PREVHDKALPPSSQAQEISLGTQEKVHADSNVT), and 1369 to 1403 (SPGLSSQSDTSRSHQRQVGPQGDRKNSSAEKSVVS). Residues 1334–1345 (PSSQAQEISLGT) are compositionally biased toward polar residues. The region spanning 1409–1497 (PHFSRLLSNV…GTLSSKAILH (89 aa)) is the Ig-like domain.

As to quaternary structure, interacts with DISC1. Interacts preferentially with phosphorylated forms of myosin regulatory light chain (MRLC). Interacts (via the N-terminal region) with HDAC6; inhibits the deacetylase activity of HDAC6. Interacts with KIBRA (via the C-terminal region); retains AMPAR in the cytosol after internalization. Ubiquitinated and degradated by the CDC20-APC/C pathway. During brain development, CDC20-APC/C complex degrades CCDC141 after centrosome translocation into the dilated area. CCDC141 is restabilized in the dilation until the centrosome enters the dilation, at which point it is once again immediately destabilized by CDC20-APC/C complex. The oscillatory regulation of CCDC141 protein is needed for proper cortical migration. In terms of processing, phosphorylation at Thr-91 by PLK1 affects CCDC141 degradation.

It localises to the cytoplasm. Its subcellular location is the cytoskeleton. The protein resides in the microtubule organizing center. It is found in the centrosome. Plays a critical role in cortical radial and GnRH neurons migration during brain development. Regulates cortical radial migration by negatively controlling the activity of histone deacetylase 6 (HDAC6) and promotes centrosome maturation. CAMDI is required for dilation formation of cortical neurons during radial migration. Plays a critical role in learning and memory performance through regulation of AMPA-selective glutamate receptors (AMPARs) cell surface expression in competition with KIBRA. In Rattus norvegicus (Rat), this protein is Coiled-coil domain-containing protein 141.